Here is a 365-residue protein sequence, read N- to C-terminus: Chorismate synthase (365 aa).

The interval 41–61 (IQKELDRRRPGQSEVSTPRHE) is disordered. R48 contacts NADP(+). FMN contacts are provided by residues 125–127 (RSS), G285, 300–304 (KPTPS), and R327.

The protein belongs to the chorismate synthase family. It depends on FMNH2 as a cofactor.

The catalysed reaction is 5-O-(1-carboxyvinyl)-3-phosphoshikimate = chorismate + phosphate. The protein operates within metabolic intermediate biosynthesis; chorismate biosynthesis; chorismate from D-erythrose 4-phosphate and phosphoenolpyruvate: step 7/7. Functionally, catalyzes the anti-1,4-elimination of the C-3 phosphate and the C-6 proR hydrogen from 5-enolpyruvylshikimate-3-phosphate (EPSP) to yield chorismate, which is the branch point compound that serves as the starting substrate for the three terminal pathways of aromatic amino acid biosynthesis. This reaction introduces a second double bond into the aromatic ring system. The protein is Chorismate synthase of Methanosarcina barkeri (strain Fusaro / DSM 804).